A 501-amino-acid polypeptide reads, in one-letter code: MNYFPWLTIIVVLPISAGSLILFLPYKGNKTIRWYTICICILELLITTYAFCYHFQLDDPLIQLEEDYKWVNFFDFHWRLGIDGLSIGPILLTGFITTLATLAARPVTRDSRLLHLLMLAMYSGQIGSFSSRDLLLFFIMWELELIPVYLLLSMWGGGKKRLYSATKFILYTAGGSIFLLMGVLGMDLYGSNEPTLNFETLANQSYPVALEILFYFGFIIAFAVKSPIIPLHTWLPDTHGEAHYSTCMLLAGILLKMGAYGLIRINMELLPHAHSIFSPWLVIVGTMQIIYAASTSPGQRNLKKRIAYSSVSHMGFIIIGIGSITDAGLNGAILQIISHGFIGAALFFLAGTSYDRIRLIYLDEMGGIAIQMPKIFTMFSSFSMASLALPGMSGFVAELIVFFGIITSQKYFLMPKILITFVMAIGMILTPIYSLSMSRQMFYGYKLFNTTNSFFSDSGPRELFVSISIFLPVIGIGIYPDFVLSLSVDKVEAILSNYFYR.

14 helical membrane passes run 4-24 (FPWL…ILFL), 35-55 (YTIC…CYHF), 84-104 (GLSI…TLAA), 111-129 (SRLL…IGSF), 134-154 (LLLF…LLSM), 168-188 (FILY…GMDL), 209-229 (ALEI…SPII), 243-263 (HYST…YGLI), 273-293 (AHSI…IYAA), 306-326 (IAYS…SITD), 331-351 (GAIL…FLAG), 387-407 (LALP…GIIT), 417-437 (ILIT…SLSM), and 463-483 (LFVS…PDFV).

Belongs to the complex I subunit 4 family.

The protein localises to the plastid. Its subcellular location is the chloroplast thylakoid membrane. It carries out the reaction a plastoquinone + NADH + (n+1) H(+)(in) = a plastoquinol + NAD(+) + n H(+)(out). The catalysed reaction is a plastoquinone + NADPH + (n+1) H(+)(in) = a plastoquinol + NADP(+) + n H(+)(out). This Buxus microphylla (Littleleaf boxwood) protein is NAD(P)H-quinone oxidoreductase chain 4, chloroplastic.